Consider the following 507-residue polypeptide: UDP-N-acetylglucosamine 1-carboxyvinyltransferase 1 (507 aa).

Phosphoenolpyruvate is bound at residue 41–42; it reads KN. Residue Arg112 coordinates UDP-N-acetyl-alpha-D-glucosamine. Cys136 (proton donor) is an active-site residue. Cys136 bears the 2-(S-cysteinyl)pyruvic acid O-phosphothioketal mark. UDP-N-acetyl-alpha-D-glucosamine contacts are provided by residues 141 to 145, Asp328, and Leu350; that span reads RPIDL.

This sequence belongs to the EPSP synthase family. MurA subfamily.

It is found in the cytoplasm. It catalyses the reaction phosphoenolpyruvate + UDP-N-acetyl-alpha-D-glucosamine = UDP-N-acetyl-3-O-(1-carboxyvinyl)-alpha-D-glucosamine + phosphate. The protein operates within cell wall biogenesis; peptidoglycan biosynthesis. In terms of biological role, cell wall formation. Adds enolpyruvyl to UDP-N-acetylglucosamine. This chain is UDP-N-acetylglucosamine 1-carboxyvinyltransferase 1, found in Legionella pneumophila (strain Lens).